Consider the following 301-residue polypeptide: Acetylglutamate kinase (301 aa).

Substrate is bound by residues 68-69 (GG), R90, and N197.

Belongs to the acetylglutamate kinase family. ArgB subfamily.

The protein localises to the cytoplasm. The catalysed reaction is N-acetyl-L-glutamate + ATP = N-acetyl-L-glutamyl 5-phosphate + ADP. It participates in amino-acid biosynthesis; L-arginine biosynthesis; N(2)-acetyl-L-ornithine from L-glutamate: step 2/4. Functionally, catalyzes the ATP-dependent phosphorylation of N-acetyl-L-glutamate. The protein is Acetylglutamate kinase of Nitrosococcus oceani (strain ATCC 19707 / BCRC 17464 / JCM 30415 / NCIMB 11848 / C-107).